A 498-amino-acid chain; its full sequence is MTDRSTLDDAPAQADFIIAGATLIDGGGGPARQGDLAVRGGRIVALGDFAHAPGVPVIDARGLALAPGFIDSHTHDDGYLLAHPEMLPKVSQGITTVVTGNCGISLAPLSRRQIPQPLDLLGPPELFRFATFRDWLRALAETPAAVNVIPLVGHTTLRVAVMDDTGRAATDAERAAMRALLDEALQAGAFGVSTGTFYPPASAAPTDEIIDVCQPLRGRAGAIYATHLRDEADHIVPAMEEALLIGRELDCRVVFSHHKLAGERNHGRSRETLDMISRAAATQRVCLDCHPYPATSTMLRLDRARLASRTLITWSKGYPEATGRDFSEVMAELGLDDEAAIARLAPAGAIYFLMDQADVNRIFSHPLTTVGSDGLPFDPHPHPRQWGTFTNVLRTMVREQRLLSLETAIHKMTGLAAAQYGLTERGLLRQGYHADLVLFDPANVTDTATFSAPIQVSQGIHAVWVNGRQVWDGERTGAERPGQVLAPGDAIPWSQQSE.

The interval 478–498 is disordered; that stretch reads AERPGQVLAPGDAIPWSQQSE.

Belongs to the metallo-dependent hydrolases superfamily. N-acyl-D-amino-acid deacylase family. Zn(2+) is required as a cofactor.

The protein resides in the cytoplasm. It catalyses the reaction an N-acyl-D-aspartate + H2O = D-aspartate + a carboxylate. In Alcaligenes xylosoxydans xylosoxydans (Achromobacter xylosoxidans), this protein is N-acyl-D-aspartate deacylase.